The sequence spans 508 residues: Potassium/proton antiporter CemA (508 aa).

The next 5 helical transmembrane spans lie at 66-86 (LFII…LNLL), 282-302 (YQAL…WIIS), 386-406 (ILHL…FILG), 433-453 (ILLL…EVVI), and 468-488 (IISC…KYWI).

This sequence belongs to the CemA family.

It is found in the plastid. It localises to the chloroplast inner membrane. It catalyses the reaction K(+)(in) + H(+)(out) = K(+)(out) + H(+)(in). Its function is as follows. Contributes to K(+)/H(+) antiport activity by supporting proton efflux to control proton extrusion and homeostasis in chloroplasts in a light-dependent manner to modulate photosynthesis. Prevents excessive induction of non-photochemical quenching (NPQ) under continuous-light conditions. Indirectly promotes efficient inorganic carbon uptake into chloroplasts. This Anthoceros angustus (Hornwort) protein is Potassium/proton antiporter CemA.